The chain runs to 945 residues: Alanine--tRNA ligase (945 aa).

4 residues coordinate Zn(2+): H564, H568, C666, and H670. The interval 911 to 945 (SGGGRPDMAQAGGKDASKLPEALQQARETMTEKLG) is disordered.

The protein belongs to the class-II aminoacyl-tRNA synthetase family. Zn(2+) is required as a cofactor.

Its subcellular location is the cytoplasm. The enzyme catalyses tRNA(Ala) + L-alanine + ATP = L-alanyl-tRNA(Ala) + AMP + diphosphate. Catalyzes the attachment of alanine to tRNA(Ala) in a two-step reaction: alanine is first activated by ATP to form Ala-AMP and then transferred to the acceptor end of tRNA(Ala). Also edits incorrectly charged Ser-tRNA(Ala) and Gly-tRNA(Ala) via its editing domain. The polypeptide is Alanine--tRNA ligase (Rhodopirellula baltica (strain DSM 10527 / NCIMB 13988 / SH1)).